A 163-amino-acid polypeptide reads, in one-letter code: Single-stranded DNA-binding protein 2 (163 aa).

Positions 1–104 (MINNVVLVGR…VVADNFQMLE (104 aa)) constitute an SSB domain. Positions 109–163 (REGGSTGSFNGGFNNNTSSSNSYSAPAQQTPNFGRDDSPFGNSNPMDISDDDLPF) are disordered. Residues 119-130 (GGFNNNTSSSNS) show a composition bias toward low complexity. A compositionally biased stretch (polar residues) spans 131 to 140 (YSAPAQQTPN). The short motif at 158–163 (DDDLPF) is the Important for interaction with partner proteins element.

As to quaternary structure, homotetramer.

Its function is as follows. Plays an important role in DNA replication, recombination and repair. Binds to ssDNA and to an array of partner proteins to recruit them to their sites of action during DNA metabolism. This chain is Single-stranded DNA-binding protein 2 (ssb2), found in Streptococcus pyogenes serotype M6 (strain ATCC BAA-946 / MGAS10394).